Here is a 503-residue protein sequence, read N- to C-terminus: ATP synthase subunit alpha (503 aa).

An ATP-binding site is contributed by 169–176; it reads GDRKTGKT.

It belongs to the ATPase alpha/beta chains family. In terms of assembly, F-type ATPases have 2 components, CF(1) - the catalytic core - and CF(0) - the membrane proton channel. CF(1) has five subunits: alpha(3), beta(3), gamma(1), delta(1), epsilon(1). CF(0) has three main subunits: a(1), b(2) and c(9-12). The alpha and beta chains form an alternating ring which encloses part of the gamma chain. CF(1) is attached to CF(0) by a central stalk formed by the gamma and epsilon chains, while a peripheral stalk is formed by the delta and b chains.

The protein localises to the cell membrane. The enzyme catalyses ATP + H2O + 4 H(+)(in) = ADP + phosphate + 5 H(+)(out). Its function is as follows. Produces ATP from ADP in the presence of a proton gradient across the membrane. The alpha chain is a regulatory subunit. This chain is ATP synthase subunit alpha, found in Lactobacillus helveticus (strain DPC 4571).